Here is a 166-residue protein sequence, read N- to C-terminus: MTEGRNKEELEDITLLGNQNNKYDFDYRPDVLESFDNKHQGRDYFVKFNCPEFTSLCPITGQPDFATIYISYIPNIKMVESKSLKLYLFSFRNHGDFHEDCMNIIMNDLIELMDPHYIEVWGKFTPRGGISIDPYTNYGRPDSKYEKMAEHRLMNHDLYPEKIDNR.

Cys57 functions as the Thioimide intermediate in the catalytic mechanism. Asp64 acts as the Proton donor in catalysis. Substrate is bound by residues 79–81 (VES) and 98–99 (HE).

Belongs to the GTP cyclohydrolase I family. QueF type 1 subfamily.

It is found in the cytoplasm. The enzyme catalyses 7-aminomethyl-7-carbaguanine + 2 NADP(+) = 7-cyano-7-deazaguanine + 2 NADPH + 3 H(+). It functions in the pathway tRNA modification; tRNA-queuosine biosynthesis. In terms of biological role, catalyzes the NADPH-dependent reduction of 7-cyano-7-deazaguanine (preQ0) to 7-aminomethyl-7-deazaguanine (preQ1). The sequence is that of NADPH-dependent 7-cyano-7-deazaguanine reductase from Staphylococcus saprophyticus subsp. saprophyticus (strain ATCC 15305 / DSM 20229 / NCIMB 8711 / NCTC 7292 / S-41).